A 214-amino-acid polypeptide reads, in one-letter code: Peptide methionine sulfoxide reductase MsrA 2 (214 aa).

Residue Cys-45 is part of the active site.

It belongs to the MsrA Met sulfoxide reductase family.

The catalysed reaction is L-methionyl-[protein] + [thioredoxin]-disulfide + H2O = L-methionyl-(S)-S-oxide-[protein] + [thioredoxin]-dithiol. It catalyses the reaction [thioredoxin]-disulfide + L-methionine + H2O = L-methionine (S)-S-oxide + [thioredoxin]-dithiol. Has an important function as a repair enzyme for proteins that have been inactivated by oxidation. Catalyzes the reversible oxidation-reduction of methionine sulfoxide in proteins to methionine. The polypeptide is Peptide methionine sulfoxide reductase MsrA 2 (msrA2) (Synechocystis sp. (strain ATCC 27184 / PCC 6803 / Kazusa)).